Reading from the N-terminus, the 106-residue chain is Insulin-like peptide 03 (106 aa).

The N-terminal stretch at 1–18 is a signal peptide; the sequence is MLFYFGLAVIFLIDSSQT. A propeptide spanning residues 19–34 is cleaved from the precursor; sequence QTLYKVNEVGGSQVDR. 3 disulfide bridges follow: C37/C93, C49/C106, and C92/C97. The propeptide at 52–82 is c peptide; it reads KKRQNIPRKYGRDPNNILEKEEFAKRFLRVR.

This sequence belongs to the insulin family.

Its subcellular location is the secreted. In terms of biological role, insulin decreases blood glucose concentration. May have evolved to activate insulin receptors (INSR) in vertebrates. Molecular docking studies reveals unique interaction with the human insulin receptor. In vivo, insulin-like peptide injection reduces blood glucose levels in two models of zebrafish diabetes (streptozotocin- and glucose-induced). Also shorter swimming distance of zebrafish larvae, an effect which is not observed with human insulin. The polypeptide is Insulin-like peptide 03 (Exaiptasia diaphana (Tropical sea anemone)).